The primary structure comprises 80 residues: UPF0291 protein YlaC (80 aa).

It belongs to the UPF0291 family.

Its subcellular location is the cytoplasm. This Lactococcus lactis subsp. lactis (strain IL1403) (Streptococcus lactis) protein is UPF0291 protein YlaC (ylcA).